A 122-amino-acid chain; its full sequence is Large ribosomal subunit protein uL18 (122 aa).

This sequence belongs to the universal ribosomal protein uL18 family. In terms of assembly, part of the 50S ribosomal subunit; part of the 5S rRNA/L5/L18/L25 subcomplex. Contacts the 5S and 23S rRNAs.

In terms of biological role, this is one of the proteins that bind and probably mediate the attachment of the 5S RNA into the large ribosomal subunit, where it forms part of the central protuberance. This Buchnera aphidicola subsp. Acyrthosiphon pisum (strain 5A) protein is Large ribosomal subunit protein uL18.